Consider the following 295-residue polypeptide: Bifunctional protein FolD (295 aa).

NADP(+) contacts are provided by residues 165–167 (GRG), Ser-192, and Ile-233.

It belongs to the tetrahydrofolate dehydrogenase/cyclohydrolase family. In terms of assembly, homodimer.

The enzyme catalyses (6R)-5,10-methylene-5,6,7,8-tetrahydrofolate + NADP(+) = (6R)-5,10-methenyltetrahydrofolate + NADPH. It carries out the reaction (6R)-5,10-methenyltetrahydrofolate + H2O = (6R)-10-formyltetrahydrofolate + H(+). It participates in one-carbon metabolism; tetrahydrofolate interconversion. Catalyzes the oxidation of 5,10-methylenetetrahydrofolate to 5,10-methenyltetrahydrofolate and then the hydrolysis of 5,10-methenyltetrahydrofolate to 10-formyltetrahydrofolate. This Tropheryma whipplei (strain TW08/27) (Whipple's bacillus) protein is Bifunctional protein FolD.